The primary structure comprises 542 residues: Prolyl 4-hydroxylase subunit alpha-3 (542 aa).

The N-terminal stretch at 1-24 is a signal peptide; sequence MGPGARLALLALLALGGDPAAATG. Positions 105–129 form a coiled coil; the sequence is LEATENIRALKDGYEKVEQDLPAFE. Residues 225–258 form a TPR repeat; the sequence is EDALDYLAFACFQVGNVSCALSLSREFLVYSPDN. Asn240 is a glycosylation site (N-linked (GlcNAc...) asparagine). A Fe2OG dioxygenase domain is found at 420 to 527; the sequence is YAEYLQVVNY…KWVANKWIHE (108 aa). Positions 438 and 440 each coordinate Fe cation. Asn480 carries an N-linked (GlcNAc...) asparagine glycan. His508 provides a ligand contact to Fe cation. Lys518 contacts 2-oxoglutarate.

This sequence belongs to the P4HA family. As to quaternary structure, heterotetramer of two alpha-3 chains and two beta chains (the beta chain is the multi-functional PDI). Requires Fe(2+) as cofactor. The cofactor is L-ascorbate. Post-translationally, N-glycosylation plays no role in the catalytic activity.

It localises to the endoplasmic reticulum lumen. It carries out the reaction L-prolyl-[collagen] + 2-oxoglutarate + O2 = trans-4-hydroxy-L-prolyl-[collagen] + succinate + CO2. Its function is as follows. Catalyzes the post-translational formation of 4-hydroxyproline in -Xaa-Pro-Gly- sequences in collagens and other proteins. The polypeptide is Prolyl 4-hydroxylase subunit alpha-3 (P4ha3) (Mus musculus (Mouse)).